Consider the following 441-residue polypeptide: 2-oxoisovalerate dehydrogenase subunit alpha, mitochondrial (441 aa).

Residues 1–17 constitute a mitochondrion transit peptide; the sequence is MISQSYRILSRISRNNE. Position 145–147 (145–147) interacts with thiamine diphosphate; sequence QYR. Positions 194, 199, and 200 each coordinate K(+).

It belongs to the BCKDHA family. In terms of assembly, heterotetramer of alpha and beta chains. The cofactor is thiamine diphosphate.

The protein resides in the mitochondrion matrix. It catalyses the reaction N(6)-[(R)-lipoyl]-L-lysyl-[protein] + 3-methyl-2-oxobutanoate + H(+) = N(6)-[(R)-S(8)-2-methylpropanoyldihydrolipoyl]-L-lysyl-[protein] + CO2. Functionally, the branched-chain alpha-keto dehydrogenase complex catalyzes the overall conversion of alpha-keto acids to acyl-CoA and CO(2). It contains multiple copies of three enzymatic components: branched-chain alpha-keto acid decarboxylase (E1), lipoamide acyltransferase (E2) and lipoamide dehydrogenase (E3). This Dictyostelium discoideum (Social amoeba) protein is 2-oxoisovalerate dehydrogenase subunit alpha, mitochondrial (bkdA).